Consider the following 108-residue polypeptide: UPF0102 protein WS0451 (108 aa).

This sequence belongs to the UPF0102 family.

This Wolinella succinogenes (strain ATCC 29543 / DSM 1740 / CCUG 13145 / JCM 31913 / LMG 7466 / NCTC 11488 / FDC 602W) (Vibrio succinogenes) protein is UPF0102 protein WS0451.